The primary structure comprises 825 residues: Putative NAD(+)--arginine ADP-ribosyltransferase Mav (825 aa).

Residues 435–673 (ALKGLKKPPG…SGSDHHLPLH (239 aa)) are disordered. Composition is skewed to pro residues over residues 443-457 (PGVPKPPEVKPPAAP) and 468-491 (SGKPGPVAPSGKPAPGPADGPLPH). Residues 560 to 579 (PAADTPAPSAPAASMSAASG) are compositionally biased toward low complexity. Residues 580–589 (PPMPPTPSLP) show a composition bias toward pro residues. Positions 590–599 (EPASLPSGPS) are enriched in low complexity. The region spanning 650–825 (KNANGHGPHD…GRTIIEMIER (176 aa)) is the TR mART core domain. Basic and acidic residues predominate over residues 656–670 (GPHDASLDSGSDHHL). Residues 687–699 (TGPGYQELNFALR), 730–733 (RGTN), and E750 each bind NAD(+). Residue R730 is part of the active site. Residues S755 and E795 contribute to the active site. E795 serves as a coordination point for NAD(+).

This sequence belongs to the Arg-specific ADP-ribosyltransferase family.

It is found in the secreted. It catalyses the reaction L-arginyl-[protein] + NAD(+) = N(omega)-(ADP-D-ribosyl)-L-arginyl-[protein] + nicotinamide + H(+). A probable mono(ADP-ribosyl)transferase, it may ADP-ribosylate Arg in target protein(s). In Mycobacterium avium (strain 104), this protein is Putative NAD(+)--arginine ADP-ribosyltransferase Mav.